The sequence spans 26 residues: Acyl carrier protein (26 aa).

The 25-residue stretch at 2–26 (SDIEQRIKQAVAEQLGMRAEEIKNE) folds into the Carrier domain.

The protein belongs to the acyl carrier protein (ACP) family. In terms of processing, 4'-phosphopantetheine is transferred from CoA to a specific serine of apo-ACP by AcpS. This modification is essential for activity because fatty acids are bound in thioester linkage to the sulfhydryl of the prosthetic group.

It localises to the cytoplasm. It participates in lipid metabolism; fatty acid biosynthesis. Carrier of the growing fatty acid chain in fatty acid biosynthesis. This chain is Acyl carrier protein (acpP), found in Acinetobacter calcoaceticus.